Consider the following 765-residue polypeptide: Phosphoribosylformylglycinamidine synthase subunit PurL (765 aa).

A compositionally biased stretch (polar residues) spans Met-1–Ile-13. The interval Met-1–Leu-32 is disordered. Residue His-65 is part of the active site. ATP-binding residues include Tyr-68 and Lys-112. Position 114 (Glu-114) interacts with Mg(2+). Substrate is bound by residues Ser-115 to His-118 and Arg-137. The Proton acceptor role is filled by His-116. Residue Asp-138 coordinates Mg(2+). Residue Gln-263 participates in substrate binding. Asp-291 contacts Mg(2+). Glu-335 to Gln-337 contributes to the substrate binding site. ATP-binding residues include Asn-523 and Gly-560. Asn-561 is a binding site for Mg(2+). Ser-563 lines the substrate pocket.

The protein belongs to the FGAMS family. Monomer. Part of the FGAM synthase complex composed of 1 PurL, 1 PurQ and 2 PurS subunits.

It is found in the cytoplasm. The catalysed reaction is N(2)-formyl-N(1)-(5-phospho-beta-D-ribosyl)glycinamide + L-glutamine + ATP + H2O = 2-formamido-N(1)-(5-O-phospho-beta-D-ribosyl)acetamidine + L-glutamate + ADP + phosphate + H(+). Its pathway is purine metabolism; IMP biosynthesis via de novo pathway; 5-amino-1-(5-phospho-D-ribosyl)imidazole from N(2)-formyl-N(1)-(5-phospho-D-ribosyl)glycinamide: step 1/2. Its function is as follows. Part of the phosphoribosylformylglycinamidine synthase complex involved in the purines biosynthetic pathway. Catalyzes the ATP-dependent conversion of formylglycinamide ribonucleotide (FGAR) and glutamine to yield formylglycinamidine ribonucleotide (FGAM) and glutamate. The FGAM synthase complex is composed of three subunits. PurQ produces an ammonia molecule by converting glutamine to glutamate. PurL transfers the ammonia molecule to FGAR to form FGAM in an ATP-dependent manner. PurS interacts with PurQ and PurL and is thought to assist in the transfer of the ammonia molecule from PurQ to PurL. This Mycolicibacterium paratuberculosis (strain ATCC BAA-968 / K-10) (Mycobacterium paratuberculosis) protein is Phosphoribosylformylglycinamidine synthase subunit PurL.